A 452-amino-acid polypeptide reads, in one-letter code: Phosphoglucosamine mutase (452 aa).

Catalysis depends on S101, which acts as the Phosphoserine intermediate. Residues S101, D241, D243, and D245 each contribute to the Mg(2+) site. Position 101 is a phosphoserine (S101).

Belongs to the phosphohexose mutase family. It depends on Mg(2+) as a cofactor. In terms of processing, activated by phosphorylation.

The enzyme catalyses alpha-D-glucosamine 1-phosphate = D-glucosamine 6-phosphate. Catalyzes the conversion of glucosamine-6-phosphate to glucosamine-1-phosphate. This Lactococcus lactis subsp. cremoris (strain SK11) protein is Phosphoglucosamine mutase.